Consider the following 273-residue polypeptide: Dermonecrotic toxin LhSicTox-alphaIA1i (273 aa).

Residue H5 is part of the active site. E25 and D27 together coordinate Mg(2+). H41 (nucleophile) is an active-site residue. Cystine bridges form between C45–C51 and C47–C190. D85 contacts Mg(2+).

The protein belongs to the arthropod phospholipase D family. Class II subfamily. The cofactor is Mg(2+). Expressed by the venom gland.

The protein resides in the secreted. The catalysed reaction is an N-(acyl)-sphingosylphosphocholine = an N-(acyl)-sphingosyl-1,3-cyclic phosphate + choline. It catalyses the reaction an N-(acyl)-sphingosylphosphoethanolamine = an N-(acyl)-sphingosyl-1,3-cyclic phosphate + ethanolamine. It carries out the reaction a 1-acyl-sn-glycero-3-phosphocholine = a 1-acyl-sn-glycero-2,3-cyclic phosphate + choline. The enzyme catalyses a 1-acyl-sn-glycero-3-phosphoethanolamine = a 1-acyl-sn-glycero-2,3-cyclic phosphate + ethanolamine. Functionally, dermonecrotic toxins cleave the phosphodiester linkage between the phosphate and headgroup of certain phospholipids (sphingolipid and lysolipid substrates), forming an alcohol (often choline) and a cyclic phosphate. This toxin acts on sphingomyelin (SM). It may also act on ceramide phosphoethanolamine (CPE), lysophosphatidylcholine (LPC) and lysophosphatidylethanolamine (LPE), but not on lysophosphatidylserine (LPS), and lysophosphatidylglycerol (LPG). It acts by transphosphatidylation, releasing exclusively cyclic phosphate products as second products. Induces dermonecrosis, hemolysis, increased vascular permeability, edema, inflammatory response, and platelet aggregation. This chain is Dermonecrotic toxin LhSicTox-alphaIA1i, found in Loxosceles hirsuta (Recluse spider).